The chain runs to 94 residues: Integration host factor subunit beta (94 aa).

The protein belongs to the bacterial histone-like protein family. Heterodimer of an alpha and a beta chain.

This protein is one of the two subunits of integration host factor, a specific DNA-binding protein that functions in genetic recombination as well as in transcriptional and translational control. The polypeptide is Integration host factor subunit beta (Azorhizobium caulinodans (strain ATCC 43989 / DSM 5975 / JCM 20966 / LMG 6465 / NBRC 14845 / NCIMB 13405 / ORS 571)).